A 342-amino-acid polypeptide reads, in one-letter code: Paired box protein Pax-9 (342 aa).

A DNA-binding region (paired) is located at residues 4-130 (AFGEVNQLGG…SSISRILRNK (127 aa)). Residues 7–63 (EVNQLGGVFVNGRPLPNAIRLRIVELAQLGIRPCDISRQLRVSHGCVSKILARYNET) form a PAI subdomain region. The tract at residues 82–130 (TVVKHIRTYKQRDPGIFAWEIRDRLLADGVCDKYNVPSVSSISRILRNK) is RED subdomain. Positions 168-189 (AAAAKVPTPPGVPAIPGSVALP) are interaction with KDM5B.

In terms of assembly, interacts with KDM5B. In terms of tissue distribution, in the embryo, expressed in pharyngeal pouches and derivatives, developing vertebral column, tail, head and limbs.

Its subcellular location is the nucleus. Functionally, transcription factor required for normal development of thymus, parathyroid glands, ultimobranchial bodies, teeth, skeletal elements of skull and larynx as well as distal limbs. The protein is Paired box protein Pax-9 (Pax9) of Mus musculus (Mouse).